Consider the following 471-residue polypeptide: Bifunctional protein GlmU (471 aa).

The segment at 1-235 is pyrophosphorylase; sequence MVAVAILAAG…YQEIFGINNR (235 aa). Residues 7–10, Lys21, Gln82, and 87–88 contribute to the UDP-N-acetyl-alpha-D-glucosamine site; these read LAAG and GT. Asp112 is a binding site for Mg(2+). Positions 149, 164, 179, and 233 each coordinate UDP-N-acetyl-alpha-D-glucosamine. Position 233 (Asn233) interacts with Mg(2+). A linker region spans residues 236 to 256; it reads KHLAKAHEILQVRVKDDWMEA. The segment at 257 to 471 is N-acetyltransferase; sequence GVTLIDPDSI…SKKEENKSSP (215 aa). Arg338 and Lys356 together coordinate UDP-N-acetyl-alpha-D-glucosamine. Catalysis depends on His368, which acts as the Proton acceptor. The UDP-N-acetyl-alpha-D-glucosamine site is built by Tyr371 and Asn382. Acetyl-CoA is bound by residues Ala385, 391 to 392, Ser410, Ala428, and Arg445; that span reads NY.

This sequence in the N-terminal section; belongs to the N-acetylglucosamine-1-phosphate uridyltransferase family. It in the C-terminal section; belongs to the transferase hexapeptide repeat family. As to quaternary structure, homotrimer. Requires Mg(2+) as cofactor.

The protein localises to the cytoplasm. The enzyme catalyses alpha-D-glucosamine 1-phosphate + acetyl-CoA = N-acetyl-alpha-D-glucosamine 1-phosphate + CoA + H(+). The catalysed reaction is N-acetyl-alpha-D-glucosamine 1-phosphate + UTP + H(+) = UDP-N-acetyl-alpha-D-glucosamine + diphosphate. The protein operates within nucleotide-sugar biosynthesis; UDP-N-acetyl-alpha-D-glucosamine biosynthesis; N-acetyl-alpha-D-glucosamine 1-phosphate from alpha-D-glucosamine 6-phosphate (route II): step 2/2. It functions in the pathway nucleotide-sugar biosynthesis; UDP-N-acetyl-alpha-D-glucosamine biosynthesis; UDP-N-acetyl-alpha-D-glucosamine from N-acetyl-alpha-D-glucosamine 1-phosphate: step 1/1. Its pathway is bacterial outer membrane biogenesis; LPS lipid A biosynthesis. In terms of biological role, catalyzes the last two sequential reactions in the de novo biosynthetic pathway for UDP-N-acetylglucosamine (UDP-GlcNAc). The C-terminal domain catalyzes the transfer of acetyl group from acetyl coenzyme A to glucosamine-1-phosphate (GlcN-1-P) to produce N-acetylglucosamine-1-phosphate (GlcNAc-1-P), which is converted into UDP-GlcNAc by the transfer of uridine 5-monophosphate (from uridine 5-triphosphate), a reaction catalyzed by the N-terminal domain. The polypeptide is Bifunctional protein GlmU (Trichodesmium erythraeum (strain IMS101)).